Consider the following 631-residue polypeptide: Probable ATP-dependent RNA helicase DDX53 (631 aa).

A KH domain is found at E48–I109. The Q motif motif lies at R222–S250. ATP contacts are provided by residues K244, Q249, T268–T273, and H311. In terms of domain architecture, Helicase ATP-binding spans W253–V428. Positions D376 to D379 match the DEAD box motif. Residues T440–A601 form the Helicase C-terminal domain.

This sequence belongs to the DEAD box helicase family. Expressed in testis. Wide expression in various cancer tissues and cancer cell lines.

The protein localises to the nucleus. The catalysed reaction is ATP + H2O = ADP + phosphate + H(+). This Homo sapiens (Human) protein is Probable ATP-dependent RNA helicase DDX53 (DDX53).